The following is a 445-amino-acid chain: Hydroxymethylglutaryl-CoA synthase (445 aa).

Aspartate 31 serves as a coordination point for (3S)-3-hydroxy-3-methylglutaryl-CoA. Glutamate 83 serves as the catalytic Proton donor/acceptor. 7 residues coordinate (3S)-3-hydroxy-3-methylglutaryl-CoA: cysteine 120, threonine 163, serine 211, histidine 244, lysine 253, asparagine 328, and serine 364. Cysteine 120 functions as the Acyl-thioester intermediate in the catalytic mechanism. Histidine 244 acts as the Proton donor/acceptor in catalysis.

It belongs to the thiolase-like superfamily. HMG-CoA synthase family.

It carries out the reaction acetoacetyl-CoA + acetyl-CoA + H2O = (3S)-3-hydroxy-3-methylglutaryl-CoA + CoA + H(+). Its pathway is metabolic intermediate biosynthesis; (R)-mevalonate biosynthesis; (R)-mevalonate from acetyl-CoA: step 2/3. With respect to regulation, in contrast to bacterial and eukaryotic HMG-CoA synthases, is insensitive to feedback substrate inhibition by acetoacetyl-CoA. Enzymatic activity is inhibited by hymeglusin, which also blocks the propagation of H.volcanii cells in vivo, indicating the critical role that the mevalonate pathway plays in isoprenoid biosynthesis by these archaea. In terms of biological role, catalyzes the condensation of acetyl-CoA with acetoacetyl-CoA to form 3-hydroxy-3-methylglutaryl-CoA (HMG-CoA). Functions in the mevalonate (MVA) pathway leading to isopentenyl diphosphate (IPP), a key precursor for the biosynthesis of isoprenoid compounds such as archaeal membrane lipids. The protein is Hydroxymethylglutaryl-CoA synthase (hmgB) of Haloferax volcanii (strain ATCC 29605 / DSM 3757 / JCM 8879 / NBRC 14742 / NCIMB 2012 / VKM B-1768 / DS2) (Halobacterium volcanii).